The following is a 403-amino-acid chain: Phosphopentomutase (403 aa).

Positions 13, 298, 303, 339, 340, and 351 each coordinate Mn(2+).

This sequence belongs to the phosphopentomutase family. Mn(2+) serves as cofactor.

It is found in the cytoplasm. It catalyses the reaction 2-deoxy-alpha-D-ribose 1-phosphate = 2-deoxy-D-ribose 5-phosphate. The catalysed reaction is alpha-D-ribose 1-phosphate = D-ribose 5-phosphate. It participates in carbohydrate degradation; 2-deoxy-D-ribose 1-phosphate degradation; D-glyceraldehyde 3-phosphate and acetaldehyde from 2-deoxy-alpha-D-ribose 1-phosphate: step 1/2. Functionally, isomerase that catalyzes the conversion of deoxy-ribose 1-phosphate (dRib-1-P) and ribose 1-phosphate (Rib-1-P) to deoxy-ribose 5-phosphate (dRib-5-P) and ribose 5-phosphate (Rib-5-P), respectively. This is Phosphopentomutase from Streptococcus pyogenes serotype M18 (strain MGAS8232).